The primary structure comprises 89 residues: Cell division topological specificity factor (89 aa).

Belongs to the MinE family.

Prevents the cell division inhibition by proteins MinC and MinD at internal division sites while permitting inhibition at polar sites. This ensures cell division at the proper site by restricting the formation of a division septum at the midpoint of the long axis of the cell. The protein is Cell division topological specificity factor of Janthinobacterium sp. (strain Marseille) (Minibacterium massiliensis).